The sequence spans 249 residues: tRNA (guanine-N(1)-)-methyltransferase (249 aa).

Residues glycine 113 and 133-138 contribute to the S-adenosyl-L-methionine site; that span reads IGDFVV.

It belongs to the RNA methyltransferase TrmD family. Homodimer.

The protein resides in the cytoplasm. It catalyses the reaction guanosine(37) in tRNA + S-adenosyl-L-methionine = N(1)-methylguanosine(37) in tRNA + S-adenosyl-L-homocysteine + H(+). Its function is as follows. Specifically methylates guanosine-37 in various tRNAs. The chain is tRNA (guanine-N(1)-)-methyltransferase from Neisseria meningitidis serogroup C / serotype 2a (strain ATCC 700532 / DSM 15464 / FAM18).